The sequence spans 49 residues: Large ribosomal subunit protein bL32 (49 aa).

It belongs to the bacterial ribosomal protein bL32 family.

The polypeptide is Large ribosomal subunit protein bL32 (Nautilia profundicola (strain ATCC BAA-1463 / DSM 18972 / AmH)).